The following is a 201-amino-acid chain: Holliday junction branch migration complex subunit RuvA (201 aa).

The domain I stretch occupies residues 1–64 (MIGRLYGKII…EDAHLLFGFA (64 aa)). The interval 65–143 (QKQDRTLFRE…GIAQTDFFVE (79 aa)) is domain II. The segment at 144–154 (HSHETMVATYE) is flexible linker. The interval 154 to 201 (EIDASEEARDALLALGYKLTDAEKMIKKVHKSGATSEQLIRDALKASL) is domain III.

This sequence belongs to the RuvA family. As to quaternary structure, homotetramer. Forms an RuvA(8)-RuvB(12)-Holliday junction (HJ) complex. HJ DNA is sandwiched between 2 RuvA tetramers; dsDNA enters through RuvA and exits via RuvB. An RuvB hexamer assembles on each DNA strand where it exits the tetramer. Each RuvB hexamer is contacted by two RuvA subunits (via domain III) on 2 adjacent RuvB subunits; this complex drives branch migration. In the full resolvosome a probable DNA-RuvA(4)-RuvB(12)-RuvC(2) complex forms which resolves the HJ.

The protein resides in the cytoplasm. Functionally, the RuvA-RuvB-RuvC complex processes Holliday junction (HJ) DNA during genetic recombination and DNA repair, while the RuvA-RuvB complex plays an important role in the rescue of blocked DNA replication forks via replication fork reversal (RFR). RuvA specifically binds to HJ cruciform DNA, conferring on it an open structure. The RuvB hexamer acts as an ATP-dependent pump, pulling dsDNA into and through the RuvAB complex. HJ branch migration allows RuvC to scan DNA until it finds its consensus sequence, where it cleaves and resolves the cruciform DNA. In Haemophilus ducreyi (strain 35000HP / ATCC 700724), this protein is Holliday junction branch migration complex subunit RuvA.